We begin with the raw amino-acid sequence, 955 residues long: Alpha-1,4 glucan phosphorylase L isozyme, chloroplastic/amyloplastic (955 aa).

The transit peptide at 1-43 (MSRLSGITPRARDDRSQFQNPRLEIAVPDRTAGLQRTKRTLLV) directs the protein to the chloroplast. A disordered region spans residues 522 to 550 (KVVTESEKDELEEKDTELEKDEDPVPAPI). Residues 528-545 (EKDELEEKDTELEKDEDP) show a composition bias toward acidic residues. K801 is subject to N6-(pyridoxal phosphate)lysine.

This sequence belongs to the glycogen phosphorylase family. Pyridoxal 5'-phosphate is required as a cofactor.

It localises to the plastid. Its subcellular location is the chloroplast. It is found in the amyloplast. It carries out the reaction [(1-&gt;4)-alpha-D-glucosyl](n) + phosphate = [(1-&gt;4)-alpha-D-glucosyl](n-1) + alpha-D-glucose 1-phosphate. Functionally, phosphorylase is an important allosteric enzyme in carbohydrate metabolism. Enzymes from different sources differ in their regulatory mechanisms and in their natural substrates. However, all known phosphorylases share catalytic and structural properties. This chain is Alpha-1,4 glucan phosphorylase L isozyme, chloroplastic/amyloplastic, found in Ipomoea batatas (Sweet potato).